The chain runs to 328 residues: 4-hydroxythreonine-4-phosphate dehydrogenase (328 aa).

Positions 135 and 136 each coordinate substrate. Residues histidine 165, histidine 210, and histidine 265 each coordinate a divalent metal cation. Lysine 273, asparagine 282, and arginine 291 together coordinate substrate.

This sequence belongs to the PdxA family. In terms of assembly, homodimer. It depends on Zn(2+) as a cofactor. Mg(2+) is required as a cofactor. Requires Co(2+) as cofactor.

The protein resides in the cytoplasm. It catalyses the reaction 4-(phosphooxy)-L-threonine + NAD(+) = 3-amino-2-oxopropyl phosphate + CO2 + NADH. The protein operates within cofactor biosynthesis; pyridoxine 5'-phosphate biosynthesis; pyridoxine 5'-phosphate from D-erythrose 4-phosphate: step 4/5. Catalyzes the NAD(P)-dependent oxidation of 4-(phosphooxy)-L-threonine (HTP) into 2-amino-3-oxo-4-(phosphooxy)butyric acid which spontaneously decarboxylates to form 3-amino-2-oxopropyl phosphate (AHAP). This chain is 4-hydroxythreonine-4-phosphate dehydrogenase, found in Pseudomonas aeruginosa (strain ATCC 15692 / DSM 22644 / CIP 104116 / JCM 14847 / LMG 12228 / 1C / PRS 101 / PAO1).